The sequence spans 387 residues: MRVLGLMSGTSADGVDAALAQFHGRPEAPHWDLLNTASVPYPSALKERLIRMAQGEPTRACDVLEMSEAVTEIQAAAAHLCDPEQSASLLGCHGQTMWHRPPVPSGESSRESGRRGASWQMLQAPLLAHLSGRPVIHDFRAADLALGGQGAPLVPMADAALMGRIDGWRGLLNLGGIANITLIPPNAGPDRQHPVLGWDCGPANTLMDLAMTRLSGGQDTFDLDGALAGRGTVCEETLERWLQEPYFLSSPPKSTGREVFGQDDLNRRLQQLAPHSAANQLATLTAFSAAVVAQDLRRLTATGQPQPVELLVAGGGCRNQTLMRQLRRRCLGVRVRPSSDLNLPTQFREALVFALLAWWHQRGHPGNAPAITGAAKATVLGLRVNPA.

9-16 (GTSADGVD) contacts ATP.

It belongs to the anhydro-N-acetylmuramic acid kinase family.

It catalyses the reaction 1,6-anhydro-N-acetyl-beta-muramate + ATP + H2O = N-acetyl-D-muramate 6-phosphate + ADP + H(+). It participates in amino-sugar metabolism; 1,6-anhydro-N-acetylmuramate degradation. The protein operates within cell wall biogenesis; peptidoglycan recycling. In terms of biological role, catalyzes the specific phosphorylation of 1,6-anhydro-N-acetylmuramic acid (anhMurNAc) with the simultaneous cleavage of the 1,6-anhydro ring, generating MurNAc-6-P. Is required for the utilization of anhMurNAc either imported from the medium or derived from its own cell wall murein, and thus plays a role in cell wall recycling. The chain is Anhydro-N-acetylmuramic acid kinase from Synechococcus sp. (strain WH7803).